An 864-amino-acid chain; its full sequence is Putative Gly-rich membrane protein Bcell_0380 (864 aa).

A helical membrane pass occupies residues 7–27 (ITFLAAFICIIFVIYAIYHSV). The interval 372–399 (TVENSFYDEDTTGQSDTGKGTPMSTADM) is disordered. Over residues 383–395 (TGQSDTGKGTPMS) the composition is skewed to polar residues.

Its subcellular location is the cell membrane. This chain is Putative Gly-rich membrane protein Bcell_0380, found in Evansella cellulosilytica (strain ATCC 21833 / DSM 2522 / FERM P-1141 / JCM 9156 / N-4) (Bacillus cellulosilyticus).